The chain runs to 269 residues: Nitrogen regulatory protein DAL80 (269 aa).

The segment at 31–55 (CQNCFTVKTPLWRRDEHGTVLCNAC) adopts a GATA-type zinc-finger fold.

It localises to the nucleus. Functionally, negative regulator of multiple nitrogen catabolic genes including the allantoin pathway genes. This Saccharomyces cerevisiae (strain ATCC 204508 / S288c) (Baker's yeast) protein is Nitrogen regulatory protein DAL80 (DAL80).